Reading from the N-terminus, the 351-residue chain is Trace amine-associated receptor 2 (351 aa).

The Extracellular portion of the chain corresponds to 1–48 (MAVSSEQHELSHFKRTQTKKEKFNCSEYGNRSCPENERSLGVRVAMYS). Residues Asn24 and Asn30 are each glycosylated (N-linked (GlcNAc...) asparagine). 2 disulfide bridges follow: Cys33/Cys197 and Cys116/Cys201. Residues 49–69 (FMAGSIFITIFGNLAMIISIS) traverse the membrane as a helical segment. Over 70-79 (YFKQLHTPTN) the chain is Cytoplasmic. Residues 80–100 (FLILSMAITDFLLGFTIMPYS) form a helical membrane-spanning segment. Residues 101–118 (MIRSVENCWYFGLTFCKI) are Extracellular-facing. Residues 119–139 (YYSFDLMLSITSIFHLCSVAI) form a helical membrane-spanning segment. The Cytoplasmic segment spans residues 140-162 (DRFYAICYPLLYSTKITIPVIKR). The helical transmembrane segment at 163 to 183 (LLLLCWSVPGAFAFGVVFSEA) threads the bilayer. The Extracellular segment spans residues 184-207 (YADGIEGYDILVACSSSCPVMFNK). Residues 208–228 (LWGTTLFMAGFFTPGSMMVGI) traverse the membrane as a helical segment. The Cytoplasmic portion of the chain corresponds to 229–263 (YGKIFAVSRKHAHAINNLRENQNNQVKKDKKAAKT). Residues 264 to 284 (LGIVIGVFLLCWFPCFFTILL) traverse the membrane as a helical segment. Over 285-299 (DPFLNFSTPVVLFDA) the chain is Extracellular. Asn289 is a glycosylation site (N-linked (GlcNAc...) asparagine). A helical membrane pass occupies residues 300 to 322 (LTWFGYFNSTCNPLIYGFFYPWF). Residues 323–351 (RRALKYILLGKIFSSCFHNTILCMQKESE) lie on the Cytoplasmic side of the membrane.

This sequence belongs to the G-protein coupled receptor 1 family. In terms of tissue distribution, not expressed in the pons, thalamus, hypothalamus, hippocampus, caudate, putamen, frontal cortex, basal forebrain, midbrain or liver.

It localises to the cell membrane. Functionally, orphan olfactory receptor specific for trace amines. Trace amine compounds are enriched in animal body fluids and act on trace amine-associated receptors (TAARs) to elicit both intraspecific and interspecific innate behaviors. Ligand-binding causes a conformation change that triggers signaling via the G(s)-class of G-proteins which activate adenylate cyclase. This Homo sapiens (Human) protein is Trace amine-associated receptor 2.